Consider the following 128-residue polypeptide: Small ribosomal subunit protein uS14m (128 aa).

This sequence belongs to the universal ribosomal protein uS14 family. As to quaternary structure, component of the mitochondrial small ribosomal subunit (mt-SSU). Mature mammalian 55S mitochondrial ribosomes consist of a small (28S) and a large (39S) subunit. The 28S small subunit contains a 12S ribosomal RNA (12S mt-rRNA) and 30 different proteins. The 39S large subunit contains a 16S rRNA (16S mt-rRNA), a copy of mitochondrial valine transfer RNA (mt-tRNA(Val)), which plays an integral structural role, and 52 different proteins. Interacts with LIAT1.

The protein localises to the mitochondrion. The polypeptide is Small ribosomal subunit protein uS14m (Homo sapiens (Human)).